A 485-amino-acid polypeptide reads, in one-letter code: E3 ubiquitin-protein ligase rnf8 (485 aa).

Residues 43 to 97 (VSVGRGLNVTHQILSSSCPLMISRIHCVFKLNEGRQWTVTDNKSLNGVWVNGKRI) enclose the FHA domain. A disordered region spans residues 150 to 232 (AASLSQKLKN…SSTCSDSSQH (83 aa)). Positions 199–219 (GERRETLKLSSRPLEEDRDKA) are enriched in basic and acidic residues. Over residues 221–230 (SSSSTCSDSS) the composition is skewed to low complexity. The RING-type zinc-finger motif lies at 392–430 (CSICSELFIEAVTLNCAHSFCQHCISEWRNRKDKCPMCW).

Belongs to the RNF8 family. As to quaternary structure, homodimer. Forms a E2-E3 ubiquitin ligase complex composed of the rnf8 homodimer and a E2 heterodimer of ube2n and ube2v2.

It is found in the nucleus. It catalyses the reaction S-ubiquitinyl-[E2 ubiquitin-conjugating enzyme]-L-cysteine + [acceptor protein]-L-lysine = [E2 ubiquitin-conjugating enzyme]-L-cysteine + N(6)-ubiquitinyl-[acceptor protein]-L-lysine.. It participates in protein modification; protein ubiquitination. Its function is as follows. E3 ubiquitin-protein ligase that plays a key role in DNA damage signaling via 2 distinct roles: by mediating the 'Lys-63'-linked ubiquitination of histones H2A and H2AX and promoting the recruitment of DNA repair proteins at double-strand breaks (DSBs) sites, and by catalyzing 'Lys-48'-linked ubiquitination to remove target proteins from DNA damage sites. Following DNA DSBs, it is recruited to the sites of damage by ATM-phosphorylated mdc1 and catalyzes the 'Lys-63'-linked ubiquitination of histones H2A and H2AX. H2A ubiquitination also mediates the ATM-dependent transcriptional silencing at regions flanking DSBs in cis, a mechanism to avoid collision between transcription and repair intermediates. Also catalyzes the formation of 'Lys-48'-linked polyubiquitin chains, leading to degradation of substrate proteins. In addition to its function in damage signaling, also plays a role in higher-order chromatin structure by mediating extensive chromatin decondensation. The sequence is that of E3 ubiquitin-protein ligase rnf8 from Danio rerio (Zebrafish).